The chain runs to 439 residues: Cobyrinate a,c-diamide synthase (439 aa).

Residues lysine 238 to glutamate 431 enclose the GATase cobBQ-type domain. Cysteine 320 (nucleophile) is an active-site residue.

Belongs to the CobB/CbiA family. Mg(2+) serves as cofactor.

It carries out the reaction cob(II)yrinate + 2 L-glutamine + 2 ATP + 2 H2O = cob(II)yrinate a,c diamide + 2 L-glutamate + 2 ADP + 2 phosphate + 2 H(+). It participates in cofactor biosynthesis; adenosylcobalamin biosynthesis; cob(II)yrinate a,c-diamide from sirohydrochlorin (anaerobic route): step 10/10. In terms of biological role, catalyzes the ATP-dependent amidation of the two carboxylate groups at positions a and c of cobyrinate, using either L-glutamine or ammonia as the nitrogen source. The polypeptide is Cobyrinate a,c-diamide synthase (Clostridium tetani (strain Massachusetts / E88)).